The following is a 448-amino-acid chain: U1 small nuclear ribonucleoprotein 70 kDa (448 aa).

Positions 91 to 201 are required for interaction with U1 RNA; sequence TEIKNATEDP…GGGLGGTRRG (111 aa). Residues 102–180 enclose the RRM domain; that stretch reads RTLFIARINY…KRVLVDVERA (79 aa). The interval 188–448 is disordered; that stretch reads PRRLGGGLGG…SSGDPSWWRQ (261 aa). Residues 191-200 are compositionally biased toward gly residues; the sequence is LGGGLGGTRR. Composition is skewed to basic and acidic residues over residues 206–234 and 262–272; these read NIKH…REGP and ERRDRERDRGR. Over residues 281-293 the composition is skewed to basic residues; that stretch reads SRSRSRERRKRRA. Composition is skewed to basic and acidic residues over residues 294–320 and 346–376; these read GSRE…DRER and RDRE…IKEE. The interval 405–425 is mediates binding to Psi; sequence RPPPAHHNMFSVPPPPILGRG. Residues 426–448 are compositionally biased toward polar residues; the sequence is NASTNPNPDNGQQSSGDPSWWRQ.

Component of the U1 snRNP. Interacts with Psi; essential for alternative splicing of P-element transposase. Interacts with the SMN complex.

It localises to the nucleus speckle. Its subcellular location is the nucleus. The protein resides in the nucleoplasm. In terms of biological role, mediates the splicing of pre-mRNA by binding to the stem loop I region of U1-snRNA. Required during oogenesis for nurse cell chromatin dispersal. The sequence is that of U1 small nuclear ribonucleoprotein 70 kDa (snRNP-U1-70K) from Drosophila melanogaster (Fruit fly).